Reading from the N-terminus, the 215-residue chain is MAARAQFLREYKLVVVGGGGVGKSALTIQFIQSHFVDEYDPTIEDSYRKQCIIDDEVALLDVLDTAGQEEYGAMREQYMRTGEGFLLVYSITSRNSFEEISIFHQQILRVKDQDSFPVIVVANKCDLEYERQVGMNEGRDLAKHFGCKFIETSAKQRINVDEAFSNLVREIRKYNREQQTGRPAIAAGGGGPAGSYTQDRHHDEAPGCCAGCVIA.

17–24 (GGGGVGKS) provides a ligand contact to GTP. The short motif at 39–47 (YDPTIEDSY) is the Effector region element. GTP-binding positions include 64–68 (DTAGQ) and 123–126 (NKCD). The segment at 179–199 (QTGRPAIAAGGGGPAGSYTQD) is disordered. At Cys-212 the chain carries Cysteine methyl ester. The S-farnesyl cysteine moiety is linked to residue Cys-212. A propeptide spans 213 to 215 (VIA) (removed in mature form).

The protein belongs to the small GTPase superfamily. Ras family.

It localises to the cell membrane. The catalysed reaction is GTP + H2O = GDP + phosphate + H(+). Ras proteins bind GDP/GTP and possess intrinsic GTPase activity. This is 24 kDa Ras-like protein (CC-RAS) from Coprinopsis cinerea (strain Okayama-7 / 130 / ATCC MYA-4618 / FGSC 9003) (Inky cap fungus).